A 485-amino-acid chain; its full sequence is Efflux pump bik6 (485 aa).

The next 6 membrane-spanning stretches (helical) occupy residues 42-62 (VYTT…SAIY), 86-106 (LLIF…EVYG), 108-128 (KWPA…TATA), 139-159 (FFAG…IVDI), 172-192 (YGIT…AFIA), and 199-219 (WTEY…ALWL). Residue Asn241 is glycosylated (N-linked (GlcNAc...) asparagine). The next 6 helical transmembrane spans lie at 269–289 (MLLD…YAIL), 306–326 (WGPV…LFAA), 353–373 (LPPM…FGWT), 379–399 (SSPW…TTIF), 417–437 (AIAA…LFVW), and 447–467 (WGST…FLFF).

This sequence belongs to the major facilitator superfamily.

The protein localises to the membrane. Efflux pump; part of the gene cluster that mediates the biosynthesis of bikaverin, a red pigment also considered as a mycotoxin. The chain is Efflux pump bik6 from Gibberella fujikuroi (strain CBS 195.34 / IMI 58289 / NRRL A-6831) (Bakanae and foot rot disease fungus).